A 264-amino-acid chain; its full sequence is Protein hob3 (264 aa).

The BAR domain maps to 17 to 237 (VMMKTGHVER…FDNSVREDYS (221 aa)). Coiled coils occupy residues 25-65 (ERTV…AMTA) and 165-187 (RTEK…LVSE).

It localises to the cytoplasm. The protein localises to the cytoskeleton. In terms of biological role, involved in cytokinesis and septation where it has a role in the localization of F-actin. This chain is Protein hob3 (hob3), found in Schizosaccharomyces pombe (strain 972 / ATCC 24843) (Fission yeast).